Here is a 363-residue protein sequence, read N- to C-terminus: uncharacterized protein (363 aa).

The protein belongs to the TelA family.

This is an uncharacterized protein from Bacillus subtilis (strain 168).